The sequence spans 217 residues: UPF0111 protein MTH_1689 (217 aa).

This sequence belongs to the UPF0111 family.

In Methanothermobacter thermautotrophicus (strain ATCC 29096 / DSM 1053 / JCM 10044 / NBRC 100330 / Delta H) (Methanobacterium thermoautotrophicum), this protein is UPF0111 protein MTH_1689.